The primary structure comprises 438 residues: Enolase (438 aa).

H159 and E168 together coordinate substrate. E211 acts as the Proton donor in catalysis. Mg(2+)-binding residues include D246, E297, and D322. Positions 297 and 322 each coordinate substrate. The active-site Proton acceptor is the K347. Residues 374–377 (SHRS) and K398 contribute to the substrate site.

It belongs to the enolase family. As to quaternary structure, homodimer. It depends on Mg(2+) as a cofactor.

It localises to the cytoplasm. The catalysed reaction is (2R)-2-phosphoglycerate = phosphoenolpyruvate + H2O. Its pathway is carbohydrate degradation; glycolysis; pyruvate from D-glyceraldehyde 3-phosphate: step 4/5. This is Enolase (ENO) from Alternaria alternata (Alternaria rot fungus).